A 580-amino-acid polypeptide reads, in one-letter code: Dihydroxy-acid dehydratase (580 aa).

Aspartate 95 contacts Mg(2+). Residue cysteine 136 coordinates [2Fe-2S] cluster. Residues aspartate 137 and lysine 138 each contribute to the Mg(2+) site. At lysine 138 the chain carries N6-carboxylysine. Cysteine 209 lines the [2Fe-2S] cluster pocket. Glutamate 462 is a binding site for Mg(2+). Catalysis depends on serine 488, which acts as the Proton acceptor.

Belongs to the IlvD/Edd family. In terms of assembly, homodimer. Requires [2Fe-2S] cluster as cofactor. Mg(2+) is required as a cofactor.

It carries out the reaction (2R)-2,3-dihydroxy-3-methylbutanoate = 3-methyl-2-oxobutanoate + H2O. It catalyses the reaction (2R,3R)-2,3-dihydroxy-3-methylpentanoate = (S)-3-methyl-2-oxopentanoate + H2O. Its pathway is amino-acid biosynthesis; L-isoleucine biosynthesis; L-isoleucine from 2-oxobutanoate: step 3/4. The protein operates within amino-acid biosynthesis; L-valine biosynthesis; L-valine from pyruvate: step 3/4. In terms of biological role, functions in the biosynthesis of branched-chain amino acids. Catalyzes the dehydration of (2R,3R)-2,3-dihydroxy-3-methylpentanoate (2,3-dihydroxy-3-methylvalerate) into 2-oxo-3-methylpentanoate (2-oxo-3-methylvalerate) and of (2R)-2,3-dihydroxy-3-methylbutanoate (2,3-dihydroxyisovalerate) into 2-oxo-3-methylbutanoate (2-oxoisovalerate), the penultimate precursor to L-isoleucine and L-valine, respectively. This is Dihydroxy-acid dehydratase from Leuconostoc mesenteroides subsp. mesenteroides (strain ATCC 8293 / DSM 20343 / BCRC 11652 / CCM 1803 / JCM 6124 / NCDO 523 / NBRC 100496 / NCIMB 8023 / NCTC 12954 / NRRL B-1118 / 37Y).